The following is a 122-amino-acid chain: UPF0102 protein Krad_1407 (122 aa).

This sequence belongs to the UPF0102 family.

This is UPF0102 protein Krad_1407 from Kineococcus radiotolerans (strain ATCC BAA-149 / DSM 14245 / SRS30216).